Consider the following 135-residue polypeptide: Ribosome-binding factor A (135 aa).

Belongs to the RbfA family. As to quaternary structure, monomer. Binds 30S ribosomal subunits, but not 50S ribosomal subunits or 70S ribosomes.

Its subcellular location is the cytoplasm. In terms of biological role, one of several proteins that assist in the late maturation steps of the functional core of the 30S ribosomal subunit. Associates with free 30S ribosomal subunits (but not with 30S subunits that are part of 70S ribosomes or polysomes). Required for efficient processing of 16S rRNA. May interact with the 5'-terminal helix region of 16S rRNA. This Caldicellulosiruptor saccharolyticus (strain ATCC 43494 / DSM 8903 / Tp8T 6331) protein is Ribosome-binding factor A.